We begin with the raw amino-acid sequence, 1828 residues long: Unconventional myosin-Va (1828 aa).

A2 bears the N-acetylalanine mark. One can recognise a Myosin N-terminal SH3-like domain in the interval 8-60; that stretch reads TKFARVWIPDPEEVWKSAELLKDYKPGDKVLLLHLEEGKDLEYRLDPKTSELP. In terms of domain architecture, Myosin motor spans 69-763; it reads VGENDLTALS…QVAYLEKLRA (695 aa). 163–170 provides a ligand contact to ATP; that stretch reads GESGAGKT. Positions 599–633 are disordered; it reads ISPTSATSSGRTPLTRVPVKPTKGRPGQTAKEHKK. S600 carries the phosphoserine modification. Residues 600–610 are compositionally biased toward polar residues; sequence SPTSATSSGRT. The interval 643–665 is actin-binding; sequence LHLLMETLNATTPHYVRCIKPND. 6 IQ domains span residues 766 to 788, 789 to 813, 814 to 836, 837 to 861, 862 to 884, and 885 to 914; these read LRAA…RYLC, MQRA…KFLR, RTKA…KYKI, RRAA…RKIL, REHK…HYKR, and TMKA…EARS. Coiled-coil stretches lie at residues 914-1239 and 1314-1418; these read SVER…EVNA and GLKE…ELEV. T1032 carries the phosphothreonine modification. Residues 1105 to 1147 are disordered; it reads VPKPGHKRTDSTHSSNESEYTFSSEFAETEDIAPRTEEPTEKK. Residues 1116 to 1130 show a composition bias toward polar residues; that stretch reads THSSNESEYTFSSEF. Positions 1136-1147 are enriched in basic and acidic residues; the sequence is IAPRTEEPTEKK. 2 positions are modified to phosphoserine: S1425 and S1625. Positions 1507-1783 constitute a Dilute domain; that stretch reads TSTINSIKKV…IRTIQVRLRD (277 aa). At T1733 the chain carries Phosphothreonine.

It belongs to the TRAFAC class myosin-kinesin ATPase superfamily. Myosin family. As to quaternary structure, may be a homodimer, which associates with multiple calmodulin or myosin light chains. Interacts with RIPL2, the interaction is required for its role in dendrite formation. Interacts with MLPH. Interacts with SYTL4. Interacts with MYRIP. Interacts with RAB10; mediates the transport to the plasma membrane of SLC2A4/GLUT4 storage vesicles. Interacts with FMR1; this interaction occurs in association with polyribosome.

The catalysed reaction is ATP + H2O = ADP + phosphate + H(+). Functionally, processive actin-based motor that can move in large steps approximating the 36-nm pseudo-repeat of the actin filament. Can hydrolyze ATP in the presence of actin, which is essential for its function as a motor protein. Involved in melanosome transport. Also mediates the transport of vesicles to the plasma membrane. May also be required for some polarization process involved in dendrite formation. This is Unconventional myosin-Va (Myo5a) from Rattus norvegicus (Rat).